We begin with the raw amino-acid sequence, 222 residues long: DnaJ homolog subfamily B member 9 (222 aa).

The first 23 residues, 1 to 23, serve as a signal peptide directing secretion; sequence MATPQSVFVFAICILMITELILA. The J domain maps to 26–90; that stretch reads NYYDILGVPK…NRRKEYDIIG (65 aa). The tract at residues 91 to 222 is divergent targeting domain; the sequence is HSAFTNGKGQ…VTTYTDCSGQ (132 aa). Serine 133 bears the Phosphoserine mark.

As to quaternary structure, interacts with HSPA5/BiP; interaction is direct. Interacts with ERN1/IRE1 (via the luminal region). Interacts with DERL1.

The protein localises to the endoplasmic reticulum lumen. Functionally, co-chaperone for Hsp70 protein HSPA5/BiP that acts as a key repressor of the ERN1/IRE1-mediated unfolded protein response (UPR). J domain-containing co-chaperones stimulate the ATPase activity of Hsp70 proteins and are required for efficient substrate recognition by Hsp70 proteins. In the unstressed endoplasmic reticulum, interacts with the luminal region of ERN1/IRE1 and selectively recruits HSPA5/BiP: HSPA5/BiP disrupts the dimerization of the active ERN1/IRE1 luminal region, thereby inactivating ERN1/IRE1. Also involved in endoplasmic reticulum-associated degradation (ERAD) of misfolded proteins. Required for survival of B-cell progenitors and normal antibody production. The chain is DnaJ homolog subfamily B member 9 from Rattus norvegicus (Rat).